The following is a 729-amino-acid chain: Elongation factor 2 (729 aa).

In terms of domain architecture, tr-type G spans 19–262 (EQIRNIAIAA…MVCEHFPNPV (244 aa)). Residues 28–35 (AHVDHGKT), 94–98 (DTPGH), and 148–151 (NKVD) each bind GTP. Residue histidine 597 is modified to Diphthamide.

Belongs to the TRAFAC class translation factor GTPase superfamily. Classic translation factor GTPase family. EF-G/EF-2 subfamily.

It localises to the cytoplasm. Catalyzes the GTP-dependent ribosomal translocation step during translation elongation. During this step, the ribosome changes from the pre-translocational (PRE) to the post-translocational (POST) state as the newly formed A-site-bound peptidyl-tRNA and P-site-bound deacylated tRNA move to the P and E sites, respectively. Catalyzes the coordinated movement of the two tRNA molecules, the mRNA and conformational changes in the ribosome. This is Elongation factor 2 from Natronomonas pharaonis (strain ATCC 35678 / DSM 2160 / CIP 103997 / JCM 8858 / NBRC 14720 / NCIMB 2260 / Gabara) (Halobacterium pharaonis).